Here is a 169-residue protein sequence, read N- to C-terminus: Ribosome maturation factor RimM (169 aa).

Residues 97–169 (NDEAYFTDLI…KIVVDWEYDY (73 aa)) form the PRC barrel domain.

It belongs to the RimM family. As to quaternary structure, binds ribosomal protein uS19.

It localises to the cytoplasm. Functionally, an accessory protein needed during the final step in the assembly of 30S ribosomal subunit, possibly for assembly of the head region. Essential for efficient processing of 16S rRNA. May be needed both before and after RbfA during the maturation of 16S rRNA. It has affinity for free ribosomal 30S subunits but not for 70S ribosomes. The polypeptide is Ribosome maturation factor RimM (Francisella philomiragia subsp. philomiragia (strain ATCC 25017 / CCUG 19701 / FSC 153 / O#319-036)).